Reading from the N-terminus, the 294-residue chain is N-acetylmuramic acid 6-phosphate etherase (294 aa).

Positions threonine 56–lysine 219 constitute an SIS domain. The active-site Proton donor is the glutamate 84. Residue glutamate 115 is part of the active site.

Belongs to the GCKR-like family. MurNAc-6-P etherase subfamily. In terms of assembly, homodimer.

The enzyme catalyses N-acetyl-D-muramate 6-phosphate + H2O = N-acetyl-D-glucosamine 6-phosphate + (R)-lactate. Its pathway is amino-sugar metabolism; 1,6-anhydro-N-acetylmuramate degradation. It functions in the pathway amino-sugar metabolism; N-acetylmuramate degradation. The protein operates within cell wall biogenesis; peptidoglycan recycling. Specifically catalyzes the cleavage of the D-lactyl ether substituent of MurNAc 6-phosphate, producing GlcNAc 6-phosphate and D-lactate. Together with AnmK, is also required for the utilization of anhydro-N-acetylmuramic acid (anhMurNAc) either imported from the medium or derived from its own cell wall murein, and thus plays a role in cell wall recycling. This is N-acetylmuramic acid 6-phosphate etherase from Francisella philomiragia subsp. philomiragia (strain ATCC 25017 / CCUG 19701 / FSC 153 / O#319-036).